A 676-amino-acid polypeptide reads, in one-letter code: Protein cereblon (676 aa).

The segment covering 1–11 (MDDEETAEIDE) has biased composition (acidic residues). Disordered regions lie at residues 1-78 (MDDE…TTAH), 118-194 (EDAG…AVPR), and 249-276 (DDANNADVINTVPDDTSEASPPPPLDVD). 2 stretches are compositionally biased toward low complexity: residues 12–33 (TSSSSTNTNTNATAMATATETA) and 125–139 (VPQNPTVATNTTPPA). A compositionally biased stretch (polar residues) spans 156–177 (LVNNDSPSQASISSRHSGSDMS). Residues 314-542 (RMLIFMHQHI…IIGTTLKHES (229 aa)) form the Lon N-terminal domain. The CULT domain maps to 541-650 (ESLFYCRYCN…LAGSSVRIGK (110 aa)). 4 residues coordinate Zn(2+): cysteine 546, cysteine 549, cysteine 615, and cysteine 618.

The protein belongs to the CRBN family. As to quaternary structure, likely a component of a DCX (DDB1-CUL4-X-box) protein ligase complex. May interact with pic/DDB1. Post-translationally, ubiquitinated.

The protein localises to the nucleus. It participates in protein modification; protein ubiquitination. Its function is as follows. Substrate recognition component of a DCX (DDB1-CUL4-X-box) E3 protein ligase complex that mediates the ubiquitination and subsequent proteasomal degradation of target proteins. Has an essential role in mediating growth by negatively regulating insulin signaling. It also has a role in maintaining presynaptic function in the neuromuscular junction synapses of third-instar larvae. The sequence is that of Protein cereblon from Drosophila mojavensis (Fruit fly).